A 424-amino-acid chain; its full sequence is CinA-like protein (424 aa).

This sequence belongs to the CinA family.

This chain is CinA-like protein, found in Shewanella amazonensis (strain ATCC BAA-1098 / SB2B).